Consider the following 53-residue polypeptide: ATP synthase protein 8 (53 aa).

A helical transmembrane segment spans residues 4–24 (MAPISWLLLFIIFSITFILFC).

The protein belongs to the ATPase protein 8 family. As to quaternary structure, F-type ATPases have 2 components, CF(1) - the catalytic core - and CF(0) - the membrane proton channel.

It is found in the mitochondrion membrane. Mitochondrial membrane ATP synthase (F(1)F(0) ATP synthase or Complex V) produces ATP from ADP in the presence of a proton gradient across the membrane which is generated by electron transport complexes of the respiratory chain. F-type ATPases consist of two structural domains, F(1) - containing the extramembraneous catalytic core and F(0) - containing the membrane proton channel, linked together by a central stalk and a peripheral stalk. During catalysis, ATP synthesis in the catalytic domain of F(1) is coupled via a rotary mechanism of the central stalk subunits to proton translocation. Part of the complex F(0) domain. Minor subunit located with subunit a in the membrane. The polypeptide is ATP synthase protein 8 (mt:ATPase8) (Drosophila sechellia (Fruit fly)).